A 379-amino-acid chain; its full sequence is Cytochrome b (379 aa).

4 consecutive transmembrane segments (helical) span residues 34–54 (FGSL…FLAM), 78–99 (WLIR…YLHI), 114–134 (WNTG…GYVL), and 179–199 (FFTF…VHLL). Residues His-84 and His-98 each coordinate heme b. Residues His-183 and His-197 each contribute to the heme b site. His-202 contacts a ubiquinone. A run of 4 helical transmembrane segments spans residues 227-247 (YKDL…TLFY), 289-309 (LGGV…PTLH), 321-341 (LTQT…WIGG), and 348-368 (FITI…ILMP).

This sequence belongs to the cytochrome b family. As to quaternary structure, the cytochrome bc1 complex contains 3 respiratory subunits (MT-CYB, CYC1 and UQCRFS1), 2 core proteins (UQCRC1 and UQCRC2) and probably 6 low-molecular weight proteins. Heme b is required as a cofactor.

The protein localises to the mitochondrion inner membrane. Its function is as follows. Component of the ubiquinol-cytochrome c reductase complex (complex III or cytochrome b-c1 complex) that is part of the mitochondrial respiratory chain. The b-c1 complex mediates electron transfer from ubiquinol to cytochrome c. Contributes to the generation of a proton gradient across the mitochondrial membrane that is then used for ATP synthesis. This is Cytochrome b (MT-CYB) from Glyptemys muhlenbergii (Bog turtle).